Here is a 185-residue protein sequence, read N- to C-terminus: Ribosome-recycling factor (185 aa).

The protein belongs to the RRF family.

The protein localises to the cytoplasm. Responsible for the release of ribosomes from messenger RNA at the termination of protein biosynthesis. May increase the efficiency of translation by recycling ribosomes from one round of translation to another. This chain is Ribosome-recycling factor, found in Vibrio vulnificus (strain YJ016).